The sequence spans 259 residues: Leucine-rich repeat-containing protein 3B (259 aa).

The N-terminal stretch at 1-33 is a signal peptide; that stretch reads MNLVDLWLSRSLSMCLLLQSFVLMILCFHSASM. Positions 34–64 constitute an LRRNT domain; it reads CPKGCLCSSSGGLNVTCSNANLKEIPRDLPP. Asn47 carries N-linked (GlcNAc...) asparagine glycosylation. LRR repeat units follow at residues 65–86, 89–110, and 114–135; these read ETVL…IFKD, QLRV…AFKG, and TLQT…AFNN. N-linked (GlcNAc...) asparagine glycosylation is present at Asn94. The 53-residue stretch at 145–197 folds into the LRRCT domain; the sequence is NPWHCDCTLQQVLRSMASNHETAHNVICKTSVLDEHAGRPFLNAANDADLCNL. A helical membrane pass occupies residues 205–225; the sequence is AMLVTMFGWFTMVISYVVYYV.

This sequence belongs to the LRRC3 family.

Its subcellular location is the membrane. The polypeptide is Leucine-rich repeat-containing protein 3B (Lrrc3b) (Mus musculus (Mouse)).